The primary structure comprises 409 residues: SPI-1 type 3 secretion system translocon protein SctB (409 aa).

The chain crosses the membrane as a helical span at residues 119–140 (ISGMSSSAVALLAAANTLMLTL).

It belongs to the SctB/SipC family. The core secretion machinery of the T3SS is composed of approximately 20 different proteins, including cytoplasmic components, a base, an export apparatus and a needle. This subunit is involved in the formation of a pore, called the translocon, in host membrane.

It localises to the secreted. The protein localises to the host membrane. Its function is as follows. Component of the type III secretion system 1 (SPI-1 T3SS), also called injectisome, which is used to inject bacterial effector proteins into eukaryotic host cells. SipB/SctE1 and SipC/SctB1 are inserted into the host membrane where they form a pore and allow the translocation of effector proteins into the cytosol of target cells. The sequence is that of SPI-1 type 3 secretion system translocon protein SctB from Salmonella typhimurium (strain 14028s / SGSC 2262).